Consider the following 21-residue polypeptide: Serine protease inhibitor 1 (21 aa).

Positions 1-21 constitute a Pacifastin domain; the sequence is EQQCTPGQTKKEDCNNCTSGD. The interval 1-21 is disordered; the sequence is EQQCTPGQTKKEDCNNCTSGD.

It belongs to the protease inhibitor I19 family. Expressed in hemolymph.

Its subcellular location is the secreted. Probable serine protease inhibitor. The polypeptide is Serine protease inhibitor 1 (Melanoplus sanguinipes (Migratory grasshopper)).